A 504-amino-acid polypeptide reads, in one-letter code: Xylose import ATP-binding protein XylG (504 aa).

ABC transporter domains lie at 6–243 (LEMK…VGRE) and 260–504 (LKVD…TGGK). ATP is bound at residue 38–45 (GENGAGKS).

This sequence belongs to the ABC transporter superfamily. Xylose importer (TC 3.A.1.2.4) family. As to quaternary structure, the complex is composed of two ATP-binding proteins (XylG), two transmembrane proteins (XylH) and a solute-binding protein (XylF).

It localises to the cell membrane. It catalyses the reaction D-xylose(out) + ATP + H2O = D-xylose(in) + ADP + phosphate + H(+). Its function is as follows. Part of the ABC transporter complex XylFGH involved in xylose import. Responsible for energy coupling to the transport system. This Geobacillus kaustophilus (strain HTA426) protein is Xylose import ATP-binding protein XylG.